Consider the following 296-residue polypeptide: Mitochondrial arginine transporter BAC2 (296 aa).

Solcar repeat units lie at residues 13–93 (GREF…FSRS), 104–187 (PSYR…VRER), and 198–282 (ENLR…ALRC). 6 helical membrane passes run 16 to 36 (FVAGGFGGVAGIISGYPLDTL), 70 to 90 (AAPLASVTFQNAMVFQIYAIF), 110 to 130 (ALGGVATGAVQSLLLTPVELI), 162 to 181 (GLTITVLRDAPAHGLYFWTY), 204 to 224 (LVAGGLAGVASWVACYPLDVV), and 260 to 280 (TAVARAFVVNGAIFAAYEVAL).

Belongs to the mitochondrial carrier (TC 2.A.29) family. As to expression, high expression in flowers, stamens, petals and pollen. Expressed in roots, leaves and stems.

It localises to the mitochondrion inner membrane. Its activity is regulated as follows. Inhibited by mercuric chloride. Functionally, mitochondrial arginine transporter that catalyzes the counter-exchange of arginine with lysine, ornithine, arginine, histidine and citrulline. Substrate preference in reconstituted proteoliposomes is arginine &gt; homoarginine &gt; citrulline &gt; histidine &gt; lysine &gt; ornithine. May be involved in the delivery of arginine, released from seed reserves, to mitochondrial arginase and the export of ornithine. May contribute to proline accumulation in response to hyperosmotic stress. In Arabidopsis thaliana (Mouse-ear cress), this protein is Mitochondrial arginine transporter BAC2 (BAC2).